The primary structure comprises 126 residues: Arginine decarboxylase proenzyme (126 aa).

Ser-74 functions as the Schiff-base intermediate with substrate; via pyruvic acid in the catalytic mechanism. Pyruvic acid (Ser); by autocatalysis is present on Ser-74. The active-site Proton acceptor; for processing activity is the His-79. The active-site Proton donor; for catalytic activity is Cys-94.

The protein belongs to the prokaryotic AdoMetDC family. Type 1 subfamily. Heterooctamer of four alpha and four beta chains arranged as a tetramer of alpha/beta heterodimers. The cofactor is pyruvate. Is synthesized initially as an inactive proenzyme. Formation of the active enzyme involves a self-maturation process in which the active site pyruvoyl group is generated from an internal serine residue via an autocatalytic post-translational modification. Two non-identical subunits are generated from the proenzyme in this reaction, and the pyruvate is formed at the N-terminus of the alpha chain, which is derived from the carboxyl end of the proenzyme. The post-translation cleavage follows an unusual pathway, termed non-hydrolytic serinolysis, in which the side chain hydroxyl group of the serine supplies its oxygen atom to form the C-terminus of the beta chain, while the remainder of the serine residue undergoes an oxidative deamination to produce ammonia and the pyruvoyl group blocking the N-terminus of the alpha chain.

It carries out the reaction L-arginine + H(+) = agmatine + CO2. It functions in the pathway amine and polyamine biosynthesis; agmatine biosynthesis; agmatine from L-arginine: step 1/1. Specifically catalyzes the decarboxylation of L-arginine to agmatine. Has no S-adenosylmethionine decarboxylase (AdoMetDC) activity. In Pyrobaculum aerophilum (strain ATCC 51768 / DSM 7523 / JCM 9630 / CIP 104966 / NBRC 100827 / IM2), this protein is Arginine decarboxylase proenzyme.